We begin with the raw amino-acid sequence, 227 residues long: Urease accessory protein UreE (227 aa).

The tract at residues 192–227 is disordered; the sequence is PHGSGLHVHAIHSHGHSHSHDHDHDHNHDHDHKHKQ. Residues 209 to 221 are compositionally biased toward basic and acidic residues; sequence HSHDHDHDHNHDH.

Belongs to the UreE family.

Its subcellular location is the cytoplasm. Involved in urease metallocenter assembly. Binds nickel. Probably functions as a nickel donor during metallocenter assembly. The polypeptide is Urease accessory protein UreE (Yersinia bercovieri).